Consider the following 82-residue polypeptide: Cytochrome b559 subunit alpha (82 aa).

A helical transmembrane segment spans residues 22 to 36 (IIHAVALPAIFVAGF). Heme is bound at residue H24.

This sequence belongs to the PsbE/PsbF family. As to quaternary structure, heterodimer of an alpha subunit and a beta subunit. PSII is composed of 1 copy each of membrane proteins PsbA, PsbB, PsbC, PsbD, PsbE, PsbF, PsbH, PsbI, PsbJ, PsbK, PsbL, PsbM, PsbT, PsbX, PsbY, Psb30/Ycf12, peripheral proteins PsbO, CyanoQ (PsbQ), PsbU, PsbV and a large number of cofactors. It forms dimeric complexes. The cofactor is heme b.

The protein resides in the cellular thylakoid membrane. Functionally, this b-type cytochrome is tightly associated with the reaction center of photosystem II (PSII). PSII is a light-driven water:plastoquinone oxidoreductase that uses light energy to abstract electrons from H(2)O, generating O(2) and a proton gradient subsequently used for ATP formation. It consists of a core antenna complex that captures photons, and an electron transfer chain that converts photonic excitation into a charge separation. The sequence is that of Cytochrome b559 subunit alpha from Prochlorococcus marinus (strain NATL1A).